Reading from the N-terminus, the 701-residue chain is Elongation factor G 1 (701 aa).

The tr-type G domain maps to 8–290 (VRYRNIGICA…AVVEYLPAPT (283 aa)). Residues 17–24 (AHVDAGKT), 88–92 (DTPGH), and 142–145 (NKMD) each bind GTP.

The protein belongs to the TRAFAC class translation factor GTPase superfamily. Classic translation factor GTPase family. EF-G/EF-2 subfamily.

Its subcellular location is the cytoplasm. Catalyzes the GTP-dependent ribosomal translocation step during translation elongation. During this step, the ribosome changes from the pre-translocational (PRE) to the post-translocational (POST) state as the newly formed A-site-bound peptidyl-tRNA and P-site-bound deacylated tRNA move to the P and E sites, respectively. Catalyzes the coordinated movement of the two tRNA molecules, the mRNA and conformational changes in the ribosome. This is Elongation factor G 1 from Saccharophagus degradans (strain 2-40 / ATCC 43961 / DSM 17024).